The chain runs to 381 residues: DNA primase DnaG (381 aa).

In terms of domain architecture, Toprim spans 173-259 (DAILVVEGRS…EVEDLEKDEI (87 aa)). Residues E179, D221, and D223 each contribute to the Mg(2+) site.

Belongs to the archaeal DnaG primase family. Forms a ternary complex with MCM helicase and DNA. Component of the archaeal exosome complex. It depends on Mg(2+) as a cofactor.

The catalysed reaction is ssDNA + n NTP = ssDNA/pppN(pN)n-1 hybrid + (n-1) diphosphate.. RNA polymerase that catalyzes the synthesis of short RNA molecules used as primers for DNA polymerase during DNA replication. Also part of the exosome, which is a complex involved in RNA degradation. Acts as a poly(A)-binding protein that enhances the interaction between heteromeric, adenine-rich transcripts and the exosome. The sequence is that of DNA primase DnaG from Methanothermobacter thermautotrophicus (strain ATCC 29096 / DSM 1053 / JCM 10044 / NBRC 100330 / Delta H) (Methanobacterium thermoautotrophicum).